We begin with the raw amino-acid sequence, 83 residues long: MNYFILILVAALLILDVNCKKDGYPVEHSGCKYTCWKNEYCDKVCKDLKGEGGYCYINLTCWCTGLPDNVPLKTNQRCNGKRK.

Residues 1-19 form the signal peptide; it reads MNYFILILVAALLILDVNC. Residues 21 to 79 enclose the LCN-type CS-alpha/beta domain; it reads KDGYPVEHSGCKYTCWKNEYCDKVCKDLKGEGGYCYINLTCWCTGLPDNVPLKTNQRCN. 4 disulfide bridges follow: C31/C78, C35/C55, C41/C61, and C45/C63.

Belongs to the long (4 C-C) scorpion toxin superfamily. Sodium channel inhibitor family. In terms of tissue distribution, expressed by the venom gland.

The protein resides in the secreted. Functionally, this toxin significantly slows the fast inactivation of Nav1.2/SCN2A (EC(50)=580 nM), Nav1.3/SCN3A (EC(50)=1310 nM), Nav1.4/SCN4A (EC(50)=530 nM), and Nav1.7/SCN9A (EC(50)=1340 nM). The toxin does not affect the peak amplitude of Nav1.7 currents. On all channels cited above, the toxin requires depolarizing potentials to slow channel inactivation. In addition, the toxin has no or very weak effects on the voltage-dependence of steady-state inactivation, and on voltage-dependence of activation. In vivo, it produces paw licking in mice equivalent to the effects of whole venom. The polypeptide is Alpha-toxin CvIV4 (Centruroides vittatus (Striped bark scorpion)).